The following is a 70-amino-acid chain: Turripeptide OL179 (70 aa).

An N-terminal signal peptide occupies residues 1 to 21; it reads MMAKQVVVLLALLLLLPIVTA. The propeptide occupies 22–32; sequence SMGDASGRTGR.

In terms of tissue distribution, expressed by the venom duct.

It localises to the secreted. Its function is as follows. Acts as a neurotoxin by inhibiting an ion channel. The sequence is that of Turripeptide OL179 from Iotyrris olangoensis (Sea snail).